The following is a 634-amino-acid chain: RING finger protein 207 (634 aa).

Residues 25–63 (CHLCQEQYEHPCLLDCYHTFCASCLRGRVADSRLTCPVC) form an RING-type zinc finger. The B box-type; atypical zinc finger occupies 93–145 (EETVQCANCDLECKKQDVDAMYYCNTCCQPLCRDCRETTHKAKMFSRHEIVSL). 4 residues coordinate Zn(2+): Cys98, Cys101, Cys127, and His132. The segment at 575–634 (YEDSTSTADTQPSNELSCNTEDNWTLNSLSEETNPKNKDYYRTNKQKNTTDSTNRKEIPM) is disordered. Polar residues predominate over residues 577–606 (DSTSTADTQPSNELSCNTEDNWTLNSLSEE). Positions 607–616 (TNPKNKDYYR) are enriched in basic and acidic residues.

It localises to the cytoplasm. In terms of biological role, plays a role in cardiac repolarization possibly by stabilizing membrane expression of the potassium channel kcnh6a/zerg, or by assisting its synthesis, folding or export from the endoplasmic reticulum, in a heat shock protein-dependent manner. The chain is RING finger protein 207 (rnf207b) from Danio rerio (Zebrafish).